Consider the following 324-residue polypeptide: MSALDVDSISDIAPGLSPVTAIHYGRIQVMLFRSHLAEFAEEDLVYAMDNSVVVFGEEALLMVAPDESSIAICTYPFGLMMMEWGNWDILAVSPPSRTPTIPSESVLGISNQGGANVEQQEQSSHTIDMTLPSNFFEQSSVTQSNGTSRPRNQFVLYYQWLLDTLFSEDPSLSARNISQIVAGLWNSEHPAAKARFRELAEMEVHRHRAENPHLYPDQPRFPTTDPVPPRMRYPCVISPEDRQRILRMLDFVWEESNGQLAAEEAALNDVVQPQQAEEVGPFPDFEWEEPNHIIDMSTDLSVAQDPDFMMTEDDSMRFLLKQAS.

A DNA-binding region (HMG box) is located at residues 147-215 (TSRPRNQFVL…RHRAENPHLY (69 aa)).

Its subcellular location is the nucleus. Functionally, required, together with mating-type protein A-2, for efficient ascospore formation. In Neurospora crassa (strain ATCC 24698 / 74-OR23-1A / CBS 708.71 / DSM 1257 / FGSC 987), this protein is Mating-type protein A-3 (mtA-3).